We begin with the raw amino-acid sequence, 282 residues long: Undecaprenyl-diphosphatase (282 aa).

7 helical membrane-spanning segments follow: residues 40-60 (GAAFSAIVQIGTLAAVLIYFY), 87-107 (MGWMIAAGTMPIVILGLLFKT), 116-136 (LYWISVALIVLALMLTLAEWL), 153-173 (IGWKEALLIGLAQSIALIPGS), 196-216 (FSFLLSLPAVFAAGIYQLYET), 229-249 (NLAVATLFAGIVGYASIAFLI), and 256-276 (STALFILYRIALGVGILGLIA).

This sequence belongs to the UppP family.

It is found in the cell inner membrane. The catalysed reaction is di-trans,octa-cis-undecaprenyl diphosphate + H2O = di-trans,octa-cis-undecaprenyl phosphate + phosphate + H(+). In terms of biological role, catalyzes the dephosphorylation of undecaprenyl diphosphate (UPP). Confers resistance to bacitracin. In Chlorobium phaeobacteroides (strain BS1), this protein is Undecaprenyl-diphosphatase.